Here is a 442-residue protein sequence, read N- to C-terminus: D-serine dehydratase (442 aa).

Residue Lys-118 is modified to N6-(pyridoxal phosphate)lysine.

The protein belongs to the serine/threonine dehydratase family. DsdA subfamily. Monomer. Pyridoxal 5'-phosphate serves as cofactor.

The enzyme catalyses D-serine = pyruvate + NH4(+). This Shigella flexneri serotype 5b (strain 8401) protein is D-serine dehydratase.